The following is a 366-amino-acid chain: Alanine racemase (366 aa).

K40 functions as the Proton acceptor; specific for D-alanine in the catalytic mechanism. K40 bears the N6-(pyridoxal phosphate)lysine mark. R136 lines the substrate pocket. The Proton acceptor; specific for L-alanine role is filled by Y263. M310 contributes to the substrate binding site.

It belongs to the alanine racemase family. Pyridoxal 5'-phosphate serves as cofactor.

It catalyses the reaction L-alanine = D-alanine. Its pathway is amino-acid biosynthesis; D-alanine biosynthesis; D-alanine from L-alanine: step 1/1. Catalyzes the interconversion of L-alanine and D-alanine. May also act on other amino acids. This is Alanine racemase (alr) from Streptococcus pyogenes serotype M1.